The chain runs to 351 residues: Protein FAM118B (351 aa).

Position 2 is an N-acetylalanine (Ala-2). At Ser-9 the chain carries Phosphoserine.

Belongs to the FAM118 family.

It localises to the nucleus. The protein localises to the cajal body. Functionally, may play a role in Cajal bodies formation. In Homo sapiens (Human), this protein is Protein FAM118B (FAM118B).